The sequence spans 471 residues: Pancreatic lipase-related protein 2 (471 aa).

An N-terminal signal peptide occupies residues Met1–Gly17. Residues Cys21 and Cys27 are joined by a disulfide bond. A glycan (N-linked (GlcNAc...) asparagine) is linked at Asn71. The segment at Ile93–Pro105 is required for galactolipase activity. Residues Cys109 and Cys120 are joined by a disulfide bond. The active-site Nucleophile is Ser171. The active-site Charge relay system is Asp195. The Ca(2+) site is built by Glu206, Arg209, Asp211, and Asp214. A disulfide bridge links Cys256 with Cys280. Residues Gln257 to Ala279 are required for galactolipase activity. The active-site Charge relay system is the His282. Disulfide bonds link Cys304-Cys317 and Cys320-Cys325. N-linked (GlcNAc...) asparagine glycosylation occurs at Asn355. The PLAT domain occupies Trp359 to Cys471. The cysteines at positions 455 and 471 are disulfide-linked.

It belongs to the AB hydrolase superfamily. Lipase family.

It is found in the secreted. The protein localises to the zymogen granule membrane. It localises to the cell projection. Its subcellular location is the neuron projection. It carries out the reaction a triacylglycerol + H2O = a diacylglycerol + a fatty acid + H(+). The catalysed reaction is a 1,2-diacyl-3-O-(beta-D-galactosyl)-sn-glycerol + 2 H2O = 3-beta-D-galactosyl-sn-glycerol + 2 a fatty acid + 2 H(+). The enzyme catalyses 1,2,3-tri-(9Z-octadecenoyl)-glycerol + H2O = di-(9Z)-octadecenoylglycerol + (9Z)-octadecenoate + H(+). It catalyses the reaction di-(9Z)-octadecenoylglycerol + H2O = (9Z-octadecenoyl)-glycerol + (9Z)-octadecenoate + H(+). It carries out the reaction (9Z-octadecenoyl)-glycerol + H2O = glycerol + (9Z)-octadecenoate + H(+). The catalysed reaction is 1-(9Z-octadecenoyl)-glycerol + H2O = glycerol + (9Z)-octadecenoate + H(+). The enzyme catalyses 1,2,3-tripropanoylglycerol + H2O = dipropanoylglycerol + propanoate + H(+). It catalyses the reaction 1,2,3-tributanoylglycerol + H2O = dibutanoylglycerol + butanoate + H(+). It carries out the reaction 1,2,3-trioctanoylglycerol + H2O = dioctanoylglycerol + octanoate + H(+). The catalysed reaction is 1,2-didecanoylglycerol + H2O = decanoylglycerol + decanoate + H(+). The enzyme catalyses long chain 1,2-diacyl-3-O-beta-D-galactosyl-sn-glycerol + H2O = long chain acyl-3-O-beta-D-galactosyl-sn-glycerol + a fatty acid + H(+). It catalyses the reaction 1,2-dioctanoyl-3-O-beta-D-galactosyl-sn-glycerol + H2O = octanoyl-3-(beta-D-galactosyl)-sn-glycerol + octanoate + H(+). It carries out the reaction 1,2-didodecanoyl-3-beta-D-galactosyl-sn-glycerol + H2O = dodecanoyl-3-beta-D-galactosyl-sn-glycerol + dodecanoate + H(+). The catalysed reaction is 1-beta-D-galactosyl-2,3-didodecanoyl-sn-glycerol + H2O = 1-beta-D-galactosyl-dodecanoyl-sn-glycerol + dodecanoate + H(+). The enzyme catalyses a 1,2-diacyl-3-O-[alpha-D-galactosyl-(1-&gt;6)-beta-D-galactosyl]-sn-glycerol + H2O = acyl-3-O-[alpha-D-galactosyl-(1-&gt;6)-beta-D-galactosyl]-sn-glycerol + a fatty acid + H(+). It catalyses the reaction long chain 1,2-diacyl-3-O-[alpha-D-galactosyl-(1-&gt;6)-beta-D-galactosyl]-sn-glycerol + H2O = long chain acyl-3-O-[alpha-D-galactosyl-(1-&gt;6)-beta-D-galactosyl]-sn-glycerol + a fatty acid + H(+). It carries out the reaction 1,2-dioctanoyl-3-O-[alpha-D-galactosyl-(1-&gt;6)-beta-D-galactosyl]-sn-glycerol + H2O = octanoyl-3-O-[alpha-D-galactosyl-(1-&gt;6)-beta-D-galactosyl]-sn-glycerol + octanoate + H(+). The catalysed reaction is 1,2-didodecanoyl-3-O-[alpha-D-galactosyl-(1-&gt;6)-beta-D-galactosyl]-sn-glycerol + H2O = dodecanoyl-3-O-[alpha-D-galactosyl-(1-&gt;6)-beta-D-galactosyl]-sn-glycerol + dodecanoate + H(+). The enzyme catalyses a 1,2-diacyl-sn-glycero-3-phosphocholine + H2O = a monoacyl-sn-glycero-3-phosphocholine + a fatty acid + H(+). The protein operates within glycerolipid metabolism; triacylglycerol degradation. It participates in glycolipid metabolism. Up-regulated by CLPS in the presence of increasing concentrations of bile salts. In terms of biological role, lipase that primarily hydrolyzes triglycerides and galactosylglycerides. In neonates, may play a major role in pancreatic digestion of dietary fats such as milk fat globules enriched in long-chain triglycerides. Hydrolyzes short-, medium- and long-chain fatty acyls in triglycerides without apparent positional specificity. Can completely deacylate triacylglycerols. When the liver matures and bile salt synthesis increases, likely functions mainly as a galactolipase and monoacylglycerol lipase. Hydrolyzes monogalactosyldiglycerols (MGDG) and digalactosyldiacylglycerols (DGDG) present in a plant-based diet, releasing long-chain polyunsaturated fatty acids. Hydrolyzes medium- and long-chain fatty acyls in galactolipids. May act together with LIPF to hydrolyze partially digested triglycerides. Hydrolyzes long-chain monoglycerides with high efficiency. In cytotoxic T cells, contributes to perforin-dependent cell lysis, but is unlikely to mediate direct cytotoxicity. Also has low phospholipase activity. In neurons, required for the localization of the phospholipid 1-oleoyl-2-palmitoyl-PC (OPPC) to neurite tips through acyl chain remodeling of membrane phospholipids. The resulting OPPC-rich lipid membrane domain recruits the t-SNARE protein STX4 by selectively interacting with the STX4 transmembrane domain and this promotes surface expression of the dopamine transporter SLC6A3/DAT at neurite tips by facilitating fusion of SLC6A3-containing transport vesicles with the plasma membrane. This Sus scrofa (Pig) protein is Pancreatic lipase-related protein 2 (PNLIPRP2).